The sequence spans 441 residues: Deoxyguanosinetriphosphate triphosphohydrolase-like protein 1 (441 aa).

One can recognise an HD domain in the interval Arg62–Gly255.

This sequence belongs to the dGTPase family. Type 2 subfamily.

The chain is Deoxyguanosinetriphosphate triphosphohydrolase-like protein 1 from Vibrio cholerae serotype O1 (strain ATCC 39315 / El Tor Inaba N16961).